A 652-amino-acid chain; its full sequence is Potassium voltage-gated channel subfamily KQT member 1 (652 aa).

The Cytoplasmic portion of the chain corresponds to 1-110 (MSSEQPAWTF…YNFLERPTGW (110 aa)). A helical transmembrane segment spans residues 111-132 (KCFVYHFTVFLIVLICLIFSVL). Over 133–143 (STIQQYNNLAT) the chain is Extracellular. The helical transmembrane segment at 144–166 (ETLFWMEIVLVVFFGAEYVVRLW) threads the bilayer. The Cytoplasmic segment spans residues 167–182 (SAGCRSKYVGVWGRLR). A helical membrane pass occupies residues 183–208 (FARKPISVIDLIVVVASVIVLCVGSN). Residues 209–216 (GQVFATSA) are Extracellular-facing. The chain crosses the membrane as a helical; Voltage-sensor span at residues 217–232 (IRGIRFLQILRMLHVD). Residues 228-236 (MLHVDRQGG) form an interaction with KCNE3 region. Residues 233–250 (RQGGTWRLLGSVVFIHRQ) lie on the Cytoplasmic side of the membrane. Glutamine 234 serves as a coordination point for a 1,2-diacyl-sn-glycero-3-phospho-(1D-myo-inositol-4,5-bisphosphate). A helical membrane pass occupies residues 251–273 (ELITTLYIGFLGLIFSSYFVYLA). Residues 274–289 (EKDAIDSSGEYQFGSY) lie on the Extracellular side of the membrane. The segment at residues 290–310 (ADALWWGVVTVTTIGYGDKVP) is an intramembrane region (pore-forming). Residues 311-312 (QT) are Extracellular-facing. The helical transmembrane segment at 313-338 (WIGKTIASCFSVFAISFFALPAGILG) threads the bilayer. Over 339 to 652 (SGFALKVQQK…VPRMTQDNIS (314 aa)) the chain is Cytoplasmic. An interaction with CALM region spans residues 360 to 372 (AAASLIQTAWRCY). Residues 393–419 (HHLMSPSPKPKKSAMVKKKKIRTERDE) form a disordered region. A compositionally biased stretch (basic residues) spans 401-414 (KPKKSAMVKKKKIR). The tract at residues 504–518 (KVIRRMQYFVAKKKF) is interaction with CALM; calcium-dependent. Residues 524 to 561 (PYDVRDVIEQYSQGHLNLMVRIKELQRRLDQSLGKPSL) are interaction with KCNE1 C-terminus. The interaction with AKAP9 stretch occupies residues 577 to 605 (IGSRLNRVEDKVTQMDHKLNLITDMLHHL). Residues 578-609 (GSRLNRVEDKVTQMDHKLNLITDMLHHLLTNQ) are C-terminal assembly domain (tetramerization). The segment at 609–652 (QQGSQSIRTPHRSNSLNSENHPSRNTLPTYEQLNVPRMTQDNIS) is disordered.

Belongs to the potassium channel family. KQT (TC 1.A.1.15) subfamily. Kv7.1/KCNQ1 sub-subfamily. Tetramer. Heterotetramer with KCNE1; targets to the membrane raft. Interacts (via C-terminus) with CALM; forms a heterotetramer in a calcium-independent manner. Interacts with KCNE2; form a heterooligomer complex that targets to the membrane raft and leading to currents with an apparently instantaneous activation, a rapid deactivation process and a linear current-voltage relationship and decreases the amplitude of the outward current. Interacts with KCNE3; four KCNE3 molecules are bound to one KCNQ1 tetramer (4:4 KCNQ1:KCNE3 stoichiometry); alters membrane raft localization; affects KCNQ1 structure and gating properties. Interacts with KCNE4; impairs KCNQ1 localization in lipid rafts and inhibits voltage-gated potassium channel activity. Interacts with KCNE5; impairs KCNQ1 localization in lipid rafts and only conducts current upon strong and continued depolarization.

It is found in the cell membrane. The protein resides in the cytoplasmic vesicle membrane. The protein localises to the membrane raft. It localises to the endoplasmic reticulum. Its subcellular location is the basolateral cell membrane. The enzyme catalyses K(+)(in) = K(+)(out). PIP2 molecule is essential to activate KCNQ channels by inducing the coupling of the voltage-sensing domain (VSD) and the pore-forming domain (PD). Upon channel activation, PIP2 disrupts the VSD-calmodulin/CALM interactions, causing the release of CALM from the VSD which triggers the opening of the gate. Calcium potentiates KCNQ1 channel current through calcium-bound CALM. Calcium-bound CALM competes with PIP2 to stabilize the channel open state. Its function is as follows. Pore-forming subunit of the voltage-gated potassium (Kv) channel involved in the regulation of cardiomyocyte excitability and important in normal development and functions of myocardium, inner ear, stomach and colon. Associates with KCNE beta subunits that modulates current kinetics. Induces a voltage-dependent by rapidly activating and slowly deactivating potassium-selective outward current. Also promotes a delayed voltage activated potassium current showing outward rectification characteristic. During beta-adrenergic receptor stimulation participates in cardiac repolarization by associating with KCNE1 to form the I(Ks) cardiac potassium current that increases the amplitude and slows down the activation kinetics of outward potassium current I(Ks). When associated with KCNE3, forms the potassium channel that is important for cyclic AMP-stimulated intestinal secretion of chloride ions. When associated with KCNE2, forms a heterooligomer complex leading to currents with an apparently instantaneous activation, a rapid deactivation process and a linear current-voltage relationship and decreases the amplitude of the outward current. When associated with KCNE4, inhibits voltage-gated potassium channel activity. When associated with KCNE5, this complex only conducts current upon strong and continued depolarization. The polypeptide is Potassium voltage-gated channel subfamily KQT member 1 (Xenopus laevis (African clawed frog)).